A 123-amino-acid polypeptide reads, in one-letter code: Molluscan insulin-related peptide 1 (123 aa).

Residues 1-31 form the signal peptide; sequence MAGVRLVFTKAFMVTVLLTLLLNIGVKPAEG. A Pyrrolidone carboxylic acid modification is found at glutamine 32. Disulfide bonds link cysteine 48/cysteine 109, cysteine 60/cysteine 122, and cysteine 108/cysteine 113. The propeptide occupies 68 to 69; it reads MV. Pyrrolidone carboxylic acid is present on glutamine 99.

Belongs to the insulin family. Heterodimer of a B chain and an A chain linked by two disulfide bonds. In terms of tissue distribution, expressed in the cerebral light-green cells which are giant neuroendocrines cells involved in the control of growth.

Its subcellular location is the cytoplasmic vesicle. It localises to the secretory vesicle. The protein is Molluscan insulin-related peptide 1 of Lymnaea stagnalis (Great pond snail).